The sequence spans 329 residues: Biotin synthase (329 aa).

The 225-residue stretch at 38-262 (NTIQVSTLLS…IMPHSYIRLS (225 aa)) folds into the Radical SAM core domain. 3 residues coordinate [4Fe-4S] cluster: Cys-53, Cys-57, and Cys-60. 4 residues coordinate [2Fe-2S] cluster: Cys-97, Cys-128, Cys-188, and Arg-260.

It belongs to the radical SAM superfamily. Biotin synthase family. Homodimer. It depends on [4Fe-4S] cluster as a cofactor. Requires [2Fe-2S] cluster as cofactor.

The enzyme catalyses (4R,5S)-dethiobiotin + (sulfur carrier)-SH + 2 reduced [2Fe-2S]-[ferredoxin] + 2 S-adenosyl-L-methionine = (sulfur carrier)-H + biotin + 2 5'-deoxyadenosine + 2 L-methionine + 2 oxidized [2Fe-2S]-[ferredoxin]. Its pathway is cofactor biosynthesis; biotin biosynthesis; biotin from 7,8-diaminononanoate: step 2/2. Catalyzes the conversion of dethiobiotin (DTB) to biotin by the insertion of a sulfur atom into dethiobiotin via a radical-based mechanism. This chain is Biotin synthase, found in Acinetobacter baumannii (strain SDF).